A 321-amino-acid polypeptide reads, in one-letter code: Ribose-phosphate pyrophosphokinase (321 aa).

Residues 44-46 (DGE) and 103-104 (RQ) each bind ATP. The Mg(2+) site is built by histidine 137 and aspartate 179. Residue lysine 202 is part of the active site. Residues arginine 204, aspartate 228, and 232–236 (DTAGT) contribute to the D-ribose 5-phosphate site.

Belongs to the ribose-phosphate pyrophosphokinase family. Class I subfamily. In terms of assembly, homohexamer. Requires Mg(2+) as cofactor.

Its subcellular location is the cytoplasm. It carries out the reaction D-ribose 5-phosphate + ATP = 5-phospho-alpha-D-ribose 1-diphosphate + AMP + H(+). It functions in the pathway metabolic intermediate biosynthesis; 5-phospho-alpha-D-ribose 1-diphosphate biosynthesis; 5-phospho-alpha-D-ribose 1-diphosphate from D-ribose 5-phosphate (route I): step 1/1. Involved in the biosynthesis of the central metabolite phospho-alpha-D-ribosyl-1-pyrophosphate (PRPP) via the transfer of pyrophosphoryl group from ATP to 1-hydroxyl of ribose-5-phosphate (Rib-5-P). The sequence is that of Ribose-phosphate pyrophosphokinase from Staphylococcus haemolyticus (strain JCSC1435).